The sequence spans 503 residues: D-xylose-proton symporter-like 1 (503 aa).

The tract at residues 1-23 (MGFDPENQSISSVGQVVGDSSSG) is disordered. The segment covering 8-23 (QSISSVGQVVGDSSSG) has biased composition (low complexity). The next 12 helical transmembrane spans lie at 51 to 73 (FLFPALGALLFGYEIGATSCAIM), 95 to 115 (IITSGSLYGALIGSIVAFSVA), 129 to 149 (FLYLVGAIVTVVAPVFSILII), 152 to 172 (VTYGMGIGLTMHAAPMYIAET), 190 to 210 (VLGMVGGYGIGSLWITVISGW), 213 to 233 (MYATILPFPVIMGTGMCWLPA), 305 to 325 (ALTIAGGLVLFQQITGQPSVL), 346 to 366 (ISILLGLLKLVMTGVSVIVID), 374 to 394 (LLCGVSGMVISLFLLGSYYMF), 405 to 425 (ALLLYVGCYQLSFGPIGWLMI), 437 to 457 (GISLAVLVNFGANALVTFAFS), and 467 to 487 (ILFCAFGVICVVSLFFIYYIV).

The protein belongs to the major facilitator superfamily. Sugar transporter (TC 2.A.1.1) family.

Its subcellular location is the membrane. This chain is D-xylose-proton symporter-like 1, found in Arabidopsis thaliana (Mouse-ear cress).